Reading from the N-terminus, the 160-residue chain is MSDNDDIEVESDEEQPRFQSAADKRAHHNALERKRRDHIKDSFHSLRDSVPSLQGEKASRAQILDKATEYIQYMRRKNHTHQQDIDDLKRQNALLEQQVRALEKARSSAQLQTNYPSSDNSLYTNAKGGTISAFDGGSDSSSESEPEEPQNRKKLRMEAS.

Over residues 1–13 (MSDNDDIEVESDE) the composition is skewed to acidic residues. The interval 1-40 (MSDNDDIEVESDEEQPRFQSAADKRAHHNALERKRRDHIK) is disordered. At S2 the chain carries N-acetylserine. S2 and S11 each carry phosphoserine. In terms of domain architecture, bHLH spans 23–74 (DKRAHHNALERKRRDHIKDSFHSLRDSVPSLQGEKASRAQILDKATEYIQYM). Over residues 29–40 (NALERKRRDHIK) the composition is skewed to basic and acidic residues. At K66 the chain carries N6-acetyllysine. The interval 81 to 102 (HQQDIDDLKRQNALLEQQVRAL) is leucine-zipper. Residues 105–160 (ARSSAQLQTNYPSSDNSLYTNAKGGTISAFDGGSDSSSESEPEEPQNRKKLRMEAS) form a disordered region. S107 is subject to Phosphoserine. Polar residues predominate over residues 107-124 (SSAQLQTNYPSSDNSLYT). An N6-acetyllysine mark is found at K153 and K154.

Belongs to the MAX family. As to quaternary structure, efficient DNA binding requires dimerization with another bHLH protein. Binds DNA as a heterodimer with MYC or MAD. Part of the E2F6.com-1 complex in G0 phase composed of E2F6, MGA, MAX, TFDP1, CBX3, BAT8, EUHMTASE1, RING1, RNF2, MBLR, L3MBTL2 and YAF2. Component of some MLL1/MLL complex, at least composed of the core components KMT2A/MLL1, ASH2L, HCFC1/HCF1, WDR5 and RBBP5, as well as the facultative components BACC1, CHD8, E2F6, HSP70, INO80C, KANSL1, LAS1L, MAX, MCRS1, MGA, MYST1/MOF, PELP1, PHF20, PRP31, RING2, RUVB1/TIP49A, RUVB2/TIP49B, SENP3, TAF1, TAF4, TAF6, TAF7, TAF9 and TEX10. Interacts with SPAG9. The heterodimer MYC:MAX interacts with ABI1; the interaction may enhance MYC:MAX transcriptional activity. Phosphorylated.

The protein resides in the nucleus. The protein localises to the cell projection. Its subcellular location is the dendrite. Functionally, transcription regulator. Forms a sequence-specific DNA-binding protein complex with MYC or MAD which recognizes the core sequence 5'-CAC[GA]TG-3'. The MYC:MAX complex is a transcriptional activator, whereas the MAD:MAX complex is a repressor. May repress transcription via the recruitment of a chromatin remodeling complex containing H3 'Lys-9' histone methyltransferase activity. Represses MYC transcriptional activity from E-box elements. The protein is Protein max of Rattus norvegicus (Rat).